The chain runs to 74 residues: Large ribosomal subunit protein bL31 (74 aa).

Belongs to the bacterial ribosomal protein bL31 family. Type A subfamily. As to quaternary structure, part of the 50S ribosomal subunit.

Functionally, binds the 23S rRNA. This chain is Large ribosomal subunit protein bL31, found in Xanthobacter autotrophicus (strain ATCC BAA-1158 / Py2).